The sequence spans 220 residues: Charged multivesicular body protein 3 (220 aa).

Residue Gly-2 is the site of N-myristoyl glycine attachment. Residues 22 to 54 (KIRKEMRVIDRQIRDIQREQEKVKRSIKESAKK) adopt a coiled-coil conformation. Residues 168 to 169 (IL) form an important for autoinhibitory function region. The disordered stretch occupies residues 181-220 (PSKVTDALPEPEITGAMAASDEEEEEDLEAMHSRLAALRS). The MIT-interacting motif signature appears at 201 to 209 (DEEEEEDLE). Interaction with STAMBP regions lie at residues 203–207 (EEEED) and 219–220 (RS).

This sequence belongs to the SNF7 family. Probable core component of the endosomal sorting required for transport complex III (ESCRT-III). ESCRT-III components are thought to multimerize to form a flat lattice on the perimeter membrane of the endosome. Several assembly forms of ESCRT-III may exist that interact and act sequentially.

It is found in the cytoplasm. It localises to the cytosol. The protein localises to the membrane. The protein resides in the endosome. Its subcellular location is the late endosome membrane. In terms of biological role, probable core component of the endosomal sorting required for transport complex III (ESCRT-III) which is involved in multivesicular bodies (MVBs) formation and sorting of endosomal cargo proteins into MVBs. MVBs contain intraluminal vesicles (ILVs) that are generated by invagination and scission from the limiting membrane of the endosome and mostly are delivered to lysosomes enabling degradation of membrane proteins, such as stimulated growth factor receptors, lysosomal enzymes and lipids. Involved in late stages of cytokinesis. Plays a role in endosomal sorting/trafficking of EGF receptor. This is Charged multivesicular body protein 3 (chmp3) from Xenopus laevis (African clawed frog).